Reading from the N-terminus, the 246-residue chain is 1-(5-phosphoribosyl)-5-[(5-phosphoribosylamino)methylideneamino] imidazole-4-carboxamide isomerase (246 aa).

Asp-8 serves as the catalytic Proton acceptor. Asp-130 serves as the catalytic Proton donor.

The protein belongs to the HisA/HisF family.

Its subcellular location is the cytoplasm. The enzyme catalyses 1-(5-phospho-beta-D-ribosyl)-5-[(5-phospho-beta-D-ribosylamino)methylideneamino]imidazole-4-carboxamide = 5-[(5-phospho-1-deoxy-D-ribulos-1-ylimino)methylamino]-1-(5-phospho-beta-D-ribosyl)imidazole-4-carboxamide. Its pathway is amino-acid biosynthesis; L-histidine biosynthesis; L-histidine from 5-phospho-alpha-D-ribose 1-diphosphate: step 4/9. In Shigella sonnei (strain Ss046), this protein is 1-(5-phosphoribosyl)-5-[(5-phosphoribosylamino)methylideneamino] imidazole-4-carboxamide isomerase.